We begin with the raw amino-acid sequence, 513 residues long: Proline-rich receptor-like protein kinase PERK3 (513 aa).

Residues 1–123 (MARSNRCVPQ…SPPSPSRLST (123 aa)) are Extracellular-facing. N-linked (GlcNAc...) asparagine glycosylation occurs at asparagine 11. Polar residues predominate over residues 27–36 (LKSRWQQITM). The disordered stretch occupies residues 27–119 (LKSRWQQITM…GFSLSPPSPS (93 aa)). The N-linked (GlcNAc...) asparagine glycan is linked to asparagine 66. A compositionally biased stretch (low complexity) spans 78 to 89 (PSTSTPPRLGNR). A compositionally biased stretch (polar residues) spans 99-111 (GQEPTTPTMTPGF). A helical membrane pass occupies residues 124 to 144 (GAVVGISIGGGVFVLTLIFFL). Topologically, residues 145–513 (CKKKRPRDDK…TAQRYGGDSL (369 aa)) are cytoplasmic. Threonine 172 bears the Phosphothreonine mark. The region spanning 183–334 (FSEANLLGEG…DFGLAKIALD (152 aa)) is the Protein kinase domain. ATP-binding positions include 189–197 (LGEGGFGFV) and lysine 211. Tyrosine 256 is modified (phosphotyrosine). Catalysis depends on aspartate 307, which acts as the Proton acceptor. Residue serine 340 is modified to Phosphoserine. Threonine 341 and threonine 346 each carry phosphothreonine. A Phosphotyrosine modification is found at tyrosine 354.

It belongs to the protein kinase superfamily. Ser/Thr protein kinase family. As to expression, expressed at low levels in inflorescence bolt, flower buds, siliques, roots, seedlings and leaves.

Its subcellular location is the cell membrane. It carries out the reaction L-seryl-[protein] + ATP = O-phospho-L-seryl-[protein] + ADP + H(+). The enzyme catalyses L-threonyl-[protein] + ATP = O-phospho-L-threonyl-[protein] + ADP + H(+). This chain is Proline-rich receptor-like protein kinase PERK3 (PERK3), found in Arabidopsis thaliana (Mouse-ear cress).